A 568-amino-acid chain; its full sequence is Proline--tRNA ligase (568 aa).

This sequence belongs to the class-II aminoacyl-tRNA synthetase family. ProS type 1 subfamily. As to quaternary structure, homodimer.

It is found in the cytoplasm. It catalyses the reaction tRNA(Pro) + L-proline + ATP = L-prolyl-tRNA(Pro) + AMP + diphosphate. In terms of biological role, catalyzes the attachment of proline to tRNA(Pro) in a two-step reaction: proline is first activated by ATP to form Pro-AMP and then transferred to the acceptor end of tRNA(Pro). As ProRS can inadvertently accommodate and process non-cognate amino acids such as alanine and cysteine, to avoid such errors it has two additional distinct editing activities against alanine. One activity is designated as 'pretransfer' editing and involves the tRNA(Pro)-independent hydrolysis of activated Ala-AMP. The other activity is designated 'posttransfer' editing and involves deacylation of mischarged Ala-tRNA(Pro). The misacylated Cys-tRNA(Pro) is not edited by ProRS. This Aliarcobacter butzleri (strain RM4018) (Arcobacter butzleri) protein is Proline--tRNA ligase.